We begin with the raw amino-acid sequence, 63 residues long: Large ribosomal subunit protein uL29 (63 aa).

This sequence belongs to the universal ribosomal protein uL29 family.

This chain is Large ribosomal subunit protein uL29, found in Sulfurovum sp. (strain NBC37-1).